Reading from the N-terminus, the 100-residue chain is Urease subunit gamma (100 aa).

It belongs to the urease gamma subunit family. In terms of assembly, probable heterotrimer of UreA (gamma), UreB (beta) and UreC (alpha) subunits. Three heterotrimers associate to form the active enzyme. The trimeric urease interacts with an accessory complex composed of UreD, UreF and UreG, which is required for the assembly of the nickel containing metallocenter of UreC. The UreE protein may also play a direct role in nickel transfer to the urease apoprotein.

It is found in the cytoplasm. It carries out the reaction urea + 2 H2O + H(+) = hydrogencarbonate + 2 NH4(+). It participates in nitrogen metabolism; urea degradation; CO(2) and NH(3) from urea (urease route): step 1/1. The protein is Urease subunit gamma of Proteus mirabilis (strain HI4320).